Reading from the N-terminus, the 503-residue chain is Lysine--tRNA ligase (503 aa).

The Mg(2+) site is built by E414 and E421.

It belongs to the class-II aminoacyl-tRNA synthetase family. In terms of assembly, homodimer. It depends on Mg(2+) as a cofactor.

The protein localises to the cytoplasm. It carries out the reaction tRNA(Lys) + L-lysine + ATP = L-lysyl-tRNA(Lys) + AMP + diphosphate. This Neisseria gonorrhoeae (strain NCCP11945) protein is Lysine--tRNA ligase.